The chain runs to 59 residues: Gallinacin-14 (59 aa).

The N-terminal stretch at 1 to 18 (MGIFLLFLVLLAVPQAAP) is a signal peptide. Cystine bridges form between Cys25–Cys54, Cys32–Cys47, and Cys37–Cys55.

The protein belongs to the beta-defensin family.

Its subcellular location is the secreted. It is found in the cytoplasmic granule. Its function is as follows. Has bactericidal activity. This chain is Gallinacin-14 (GAL14), found in Gallus gallus (Chicken).